A 337-amino-acid polypeptide reads, in one-letter code: Viral cathepsin (337 aa).

The first 18 residues, 1–18 (MYLIYYYTIIAVATASIA), serve as a signal peptide directing secretion. The propeptide at 19-126 (NEKIFYDIDS…VTVAGPSART (108 aa)) is activation peptide. 3 cysteine pairs are disulfide-bonded: Cys-147-Cys-188, Cys-181-Cys-221, and Cys-276-Cys-324. Cys-150 is a catalytic residue. Catalysis depends on residues His-283 and Asn-303.

Belongs to the peptidase C1 family. In terms of processing, synthesized as an inactive proenzyme and activated by proteolytic removal of the inhibitory propeptide.

The enzyme catalyses Endopeptidase of broad specificity, hydrolyzing substrates of both cathepsin L and cathepsin B.. In terms of biological role, cysteine protease that plays an essential role in host liquefaction to facilitate horizontal transmission of the virus. May participate in the degradation of foreign protein expressed by the baculovirus system. The polypeptide is Viral cathepsin (VCATH) (Spodoptera litura multicapsid nucleopolyhedrovirus (SpltMNPV)).